Here is a 386-residue protein sequence, read N- to C-terminus: Succinate--CoA ligase [ADP-forming] subunit beta (386 aa).

Residues 9–244 enclose the ATP-grasp domain; that stretch reads KEILRKYGVP…HDEEDPLETR (236 aa). ATP is bound by residues K46, 53–55, E99, C102, and E107; that span reads GRG. Residues N199 and D213 each coordinate Mg(2+). Substrate-binding positions include N264 and 321-323; that span reads GIM.

This sequence belongs to the succinate/malate CoA ligase beta subunit family. In terms of assembly, heterotetramer of two alpha and two beta subunits. Mg(2+) is required as a cofactor.

The catalysed reaction is succinate + ATP + CoA = succinyl-CoA + ADP + phosphate. The enzyme catalyses GTP + succinate + CoA = succinyl-CoA + GDP + phosphate. Its pathway is carbohydrate metabolism; tricarboxylic acid cycle; succinate from succinyl-CoA (ligase route): step 1/1. In terms of biological role, succinyl-CoA synthetase functions in the citric acid cycle (TCA), coupling the hydrolysis of succinyl-CoA to the synthesis of either ATP or GTP and thus represents the only step of substrate-level phosphorylation in the TCA. The beta subunit provides nucleotide specificity of the enzyme and binds the substrate succinate, while the binding sites for coenzyme A and phosphate are found in the alpha subunit. The chain is Succinate--CoA ligase [ADP-forming] subunit beta from Rickettsia felis (strain ATCC VR-1525 / URRWXCal2) (Rickettsia azadi).